Reading from the N-terminus, the 182-residue chain is Orotate phosphoribosyltransferase (182 aa).

Residues arginine 96, lysine 97, lysine 100, histidine 102, and 122 to 130 (EDTSTTGGS) contribute to the 5-phospho-alpha-D-ribose 1-diphosphate site. Threonine 126 and arginine 154 together coordinate orotate.

Belongs to the purine/pyrimidine phosphoribosyltransferase family. PyrE subfamily. In terms of assembly, homodimer. Mg(2+) serves as cofactor.

The enzyme catalyses orotidine 5'-phosphate + diphosphate = orotate + 5-phospho-alpha-D-ribose 1-diphosphate. It functions in the pathway pyrimidine metabolism; UMP biosynthesis via de novo pathway; UMP from orotate: step 1/2. Its function is as follows. Catalyzes the transfer of a ribosyl phosphate group from 5-phosphoribose 1-diphosphate to orotate, leading to the formation of orotidine monophosphate (OMP). The sequence is that of Orotate phosphoribosyltransferase from Streptomyces avermitilis (strain ATCC 31267 / DSM 46492 / JCM 5070 / NBRC 14893 / NCIMB 12804 / NRRL 8165 / MA-4680).